The chain runs to 441 residues: UDP-N-acetylmuramoylalanine--D-glutamate ligase (441 aa).

129–135 lines the ATP pocket; sequence GTNGKST.

The protein belongs to the MurCDEF family.

The protein localises to the cytoplasm. The catalysed reaction is UDP-N-acetyl-alpha-D-muramoyl-L-alanine + D-glutamate + ATP = UDP-N-acetyl-alpha-D-muramoyl-L-alanyl-D-glutamate + ADP + phosphate + H(+). Its pathway is cell wall biogenesis; peptidoglycan biosynthesis. In terms of biological role, cell wall formation. Catalyzes the addition of glutamate to the nucleotide precursor UDP-N-acetylmuramoyl-L-alanine (UMA). The sequence is that of UDP-N-acetylmuramoylalanine--D-glutamate ligase from Zymomonas mobilis subsp. mobilis (strain ATCC 31821 / ZM4 / CP4).